Reading from the N-terminus, the 596-residue chain is Elongation factor 4 (596 aa).

Residues 2–184 form the tr-type G domain; the sequence is KNIRNFSIIA…TIVKNIPSPA (183 aa). GTP-binding positions include 14-19 and 131-134; these read DHGKST and NKID.

This sequence belongs to the TRAFAC class translation factor GTPase superfamily. Classic translation factor GTPase family. LepA subfamily.

The protein resides in the cell inner membrane. It catalyses the reaction GTP + H2O = GDP + phosphate + H(+). Required for accurate and efficient protein synthesis under certain stress conditions. May act as a fidelity factor of the translation reaction, by catalyzing a one-codon backward translocation of tRNAs on improperly translocated ribosomes. Back-translocation proceeds from a post-translocation (POST) complex to a pre-translocation (PRE) complex, thus giving elongation factor G a second chance to translocate the tRNAs correctly. Binds to ribosomes in a GTP-dependent manner. The polypeptide is Elongation factor 4 (Colwellia psychrerythraea (strain 34H / ATCC BAA-681) (Vibrio psychroerythus)).